A 296-amino-acid polypeptide reads, in one-letter code: 3-methyl-2-oxobutanoate hydroxymethyltransferase (296 aa).

Positions 1–33 (MDASDTPTHPAPHPADPAATPYGAPTTPPRPLR) are disordered. Low complexity predominate over residues 16–25 (DPAATPYGAP). 2 residues coordinate Mg(2+): aspartate 77 and aspartate 116. Residues 77-78 (DS), aspartate 116, and lysine 146 contribute to the 3-methyl-2-oxobutanoate site. Glutamate 148 contacts Mg(2+). The active-site Proton acceptor is glutamate 214.

It belongs to the PanB family. Homodecamer; pentamer of dimers. Requires Mg(2+) as cofactor.

Its subcellular location is the cytoplasm. It carries out the reaction 3-methyl-2-oxobutanoate + (6R)-5,10-methylene-5,6,7,8-tetrahydrofolate + H2O = 2-dehydropantoate + (6S)-5,6,7,8-tetrahydrofolate. The protein operates within cofactor biosynthesis; (R)-pantothenate biosynthesis; (R)-pantoate from 3-methyl-2-oxobutanoate: step 1/2. Functionally, catalyzes the reversible reaction in which hydroxymethyl group from 5,10-methylenetetrahydrofolate is transferred onto alpha-ketoisovalerate to form ketopantoate. This Frankia casuarinae (strain DSM 45818 / CECT 9043 / HFP020203 / CcI3) protein is 3-methyl-2-oxobutanoate hydroxymethyltransferase.